The following is a 284-amino-acid chain: uncharacterized protein (284 aa).

The C3H1-type zinc-finger motif lies at 37-65 (NEKKLICFSIINGENCIYGPNCTYAHSLS).

This is an uncharacterized protein from Acanthamoeba polyphaga (Amoeba).